The following is a 405-amino-acid chain: Acetylornithine aminotransferase 2 (405 aa).

Residues 105–106 (GT) and Phe-138 each bind pyridoxal 5'-phosphate. Arg-141 provides a ligand contact to N(2)-acetyl-L-ornithine. 224 to 227 (DEVQ) is a pyridoxal 5'-phosphate binding site. An N6-(pyridoxal phosphate)lysine modification is found at Lys-254. Ser-282 serves as a coordination point for N(2)-acetyl-L-ornithine. A pyridoxal 5'-phosphate-binding site is contributed by Thr-283.

The protein belongs to the class-III pyridoxal-phosphate-dependent aminotransferase family. ArgD subfamily. As to quaternary structure, homodimer. Requires pyridoxal 5'-phosphate as cofactor.

It is found in the cytoplasm. The enzyme catalyses N(2)-acetyl-L-ornithine + 2-oxoglutarate = N-acetyl-L-glutamate 5-semialdehyde + L-glutamate. It functions in the pathway amino-acid biosynthesis; L-arginine biosynthesis; N(2)-acetyl-L-ornithine from L-glutamate: step 4/4. The sequence is that of Acetylornithine aminotransferase 2 from Caulobacter vibrioides (strain ATCC 19089 / CIP 103742 / CB 15) (Caulobacter crescentus).